The following is a 570-amino-acid chain: Endo-1,4-beta-xylanase 4 (570 aa).

An N-terminal signal peptide occupies residues 1 to 24 (MKRFNYGFFHLVLFLISLLLLGSG). N-linked (GlcNAc...) asparagine glycans are attached at residues asparagine 92, asparagine 190, and asparagine 300. The region spanning 195 to 494 (EGSVISIEQI…TQAGDLIDKL (300 aa)) is the GH10 domain. Glutamate 325 (proton donor) is an active-site residue. Asparagine 339 is a glycosylation site (N-linked (GlcNAc...) asparagine). Glutamate 432 acts as the Nucleophile in catalysis. N-linked (GlcNAc...) asparagine glycosylation occurs at asparagine 545.

This sequence belongs to the glycosyl hydrolase 10 (cellulase F) family.

The catalysed reaction is Endohydrolysis of (1-&gt;4)-beta-D-xylosidic linkages in xylans.. Its pathway is glycan degradation; xylan degradation. Functionally, binds to and hydrolyzes insoluble and soluble xylan substrates. The polypeptide is Endo-1,4-beta-xylanase 4 (Arabidopsis thaliana (Mouse-ear cress)).